The sequence spans 117 residues: Ribonuclease P protein component (117 aa).

It belongs to the RnpA family. As to quaternary structure, consists of a catalytic RNA component (M1 or rnpB) and a protein subunit.

It catalyses the reaction Endonucleolytic cleavage of RNA, removing 5'-extranucleotides from tRNA precursor.. RNaseP catalyzes the removal of the 5'-leader sequence from pre-tRNA to produce the mature 5'-terminus. It can also cleave other RNA substrates such as 4.5S RNA. The protein component plays an auxiliary but essential role in vivo by binding to the 5'-leader sequence and broadening the substrate specificity of the ribozyme. The protein is Ribonuclease P protein component of Nocardioides sp. (strain ATCC BAA-499 / JS614).